Reading from the N-terminus, the 174-residue chain is Peroxisome assembly protein 22 (174 aa).

A helical membrane pass occupies residues 9 to 27 (GYLAIIAAVSIGAAAYLWW).

The protein belongs to the peroxin-22 family.

It is found in the peroxisome membrane. Its function is as follows. Involved in peroxisome biogenesis. The polypeptide is Peroxisome assembly protein 22 (PEX22) (Candida glabrata (strain ATCC 2001 / BCRC 20586 / JCM 3761 / NBRC 0622 / NRRL Y-65 / CBS 138) (Yeast)).